Reading from the N-terminus, the 412-residue chain is Putative competence-damage inducible protein (412 aa).

The protein belongs to the CinA family.

This Bacillus cereus (strain ZK / E33L) protein is Putative competence-damage inducible protein.